The primary structure comprises 86 residues: MSIYHDEVEIEDFEYDEEEEMYYYPCPCGDRFQISKEELIEGEEVATCPSCSLVIKVIYDPEMFKAEEDEESALNEKLGDLKLEKN.

One can recognise a DPH-type MB domain in the interval 4 to 60; that stretch reads YHDEVEIEDFEYDEEEEMYYYPCPCGDRFQISKEELIEGEEVATCPSCSLVIKVIYD. 4 residues coordinate Fe cation: C26, C28, C48, and C51.

This sequence belongs to the DPH3 family. As to quaternary structure, component of the 2-(3-amino-3-carboxypropyl)histidine synthase complex composed of Dph1, Dph2, Dph3 and a NADH-dependent reductase. The cofactor is Fe(2+).

It catalyses the reaction [3Fe-4S](1+)-[protein] + Fe(2+)-[Dph3] = [3Fe-4S](0)-[protein] + Fe(3+)-[Dph3]. It carries out the reaction 2 [3Fe-4S](0)-[protein] + 2 Fe(2+)-[Dph3] + NADH = 2 [4Fe-4S](1+)-[protein] + 2 [Dph3] + NAD(+) + H(+). It functions in the pathway protein modification; peptidyl-diphthamide biosynthesis. Required for the first step of diphthamide biosynthesis, a post-translational modification of histidine which occurs in elongation factor 2. Dph1 and Dph2 transfer a 3-amino-3-carboxypropyl (ACP) group from S-adenosyl-L-methionine (SAM) to a histidine residue, the reaction is assisted by a reduction system comprising Dph3 and a NADH-dependent reductase. Acts as an electron donor to reduce the Fe-S cluster in Dph1-Dph2 keeping the [4Fe-4S] clusters in the active and reduced state. Restores iron to Dph1-Dph2 iron-sulfur clusters which have degraded from [4Fe-4S] to [3Fe-4S] by donating an iron atom to reform [4Fe-4S] clusters, in a manner dependent on the presence of elongation factor 2 and SAM. Associates with the elongator complex and is required for tRNA Wobble base modifications mediated by the elongator complex. The elongator complex is required for multiple tRNA modifications, including mcm5U (5-methoxycarbonylmethyl uridine), mcm5s 2U (5-methoxycarbonylmethyl-2-thiouridine), and ncm5U (5-carbamoylmethyl uridine). The protein is Diphthamide biosynthesis protein 3 of Drosophila melanogaster (Fruit fly).